We begin with the raw amino-acid sequence, 509 residues long: Heat shock 70 kDa protein 14 (509 aa).

Belongs to the heat shock protein 70 family. In terms of assembly, component of ribosome-associated complex (RAC), a heterodimer composed of Hsp70/DnaK-type chaperone HSPA14 and Hsp40/DnaJ-type chaperone DNAJC2.

The protein localises to the cytoplasm. It is found in the cytosol. Functionally, component of the ribosome-associated complex (RAC), a complex involved in folding or maintaining nascent polypeptides in a folding-competent state. In the RAC complex, binds to the nascent polypeptide chain, while DNAJC2 stimulates its ATPase activity. The chain is Heat shock 70 kDa protein 14 (Hspa14) from Mus musculus (Mouse).